A 101-amino-acid polypeptide reads, in one-letter code: Small ribosomal subunit protein uS17 (101 aa).

Belongs to the universal ribosomal protein uS17 family. As to quaternary structure, part of the 30S ribosomal subunit.

One of the primary rRNA binding proteins, it binds specifically to the 5'-end of 16S ribosomal RNA. The chain is Small ribosomal subunit protein uS17 from Kosmotoga olearia (strain ATCC BAA-1733 / DSM 21960 / TBF 19.5.1).